Here is a 251-residue protein sequence, read N- to C-terminus: Aliphatic sulfonates import ATP-binding protein SsuB (251 aa).

Positions 3 to 231 constitute an ABC transporter domain; that stretch reads VSINEVSKYF…PRNKTSQSFQ (229 aa). 39–46 serves as a coordination point for ATP; the sequence is GPSGCGKS.

It belongs to the ABC transporter superfamily. Aliphatic sulfonates importer (TC 3.A.1.17.2) family. As to quaternary structure, the complex is composed of two ATP-binding proteins (SsuB), two transmembrane proteins (SsuC) and a solute-binding protein (SsuA).

It is found in the cell membrane. The catalysed reaction is ATP + H2O + aliphatic sulfonate-[sulfonate-binding protein]Side 1 = ADP + phosphate + aliphatic sulfonateSide 2 + [sulfonate-binding protein]Side 1.. Its function is as follows. Part of the ABC transporter complex SsuABC involved in aliphatic sulfonates import. Responsible for energy coupling to the transport system. The sequence is that of Aliphatic sulfonates import ATP-binding protein SsuB from Bacillus thuringiensis subsp. konkukian (strain 97-27).